We begin with the raw amino-acid sequence, 124 residues long: Small ribosomal subunit protein bS6 (124 aa).

This sequence belongs to the bacterial ribosomal protein bS6 family.

In terms of biological role, binds together with bS18 to 16S ribosomal RNA. This chain is Small ribosomal subunit protein bS6, found in Actinobacillus pleuropneumoniae serotype 5b (strain L20).